A 470-amino-acid chain; its full sequence is Iron-sulfur cluster assembly protein SufB (470 aa).

Belongs to the iron-sulfur cluster assembly SufBD family. Component of a complex composed of SufB, SufC and SufD in a stoichiometric ratio of 1:2:1. Interacts with SufC. Interacts with SufD.

It participates in cofactor biosynthesis; iron-sulfur cluster biosynthesis. Its function is as follows. Participates in the sulfur mobilization (SUF) pathway for iron-sulfur (Fe-S) cluster biogenesis. As part of a complex consisting of SufB-SufC(2)-SufD, involved in assembly of [4Fe-4S] clusters. Exhibits ATPase activity. This is Iron-sulfur cluster assembly protein SufB from Plasmodium falciparum (isolate 3D7).